The chain runs to 269 residues: 4-hydroxy-tetrahydrodipicolinate reductase (269 aa).

NAD(+) is bound by residues 8–13 and E34; that span reads GAAGRM. R35 provides a ligand contact to NADP(+). NAD(+) contacts are provided by residues 98–100 and 122–125; these read GTT and APNY. The active-site Proton donor/acceptor is H155. A (S)-2,3,4,5-tetrahydrodipicolinate-binding site is contributed by H156. K159 acts as the Proton donor in catalysis. Residue 165–166 participates in (S)-2,3,4,5-tetrahydrodipicolinate binding; that stretch reads GT.

It belongs to the DapB family.

It localises to the cytoplasm. The enzyme catalyses (S)-2,3,4,5-tetrahydrodipicolinate + NAD(+) + H2O = (2S,4S)-4-hydroxy-2,3,4,5-tetrahydrodipicolinate + NADH + H(+). It carries out the reaction (S)-2,3,4,5-tetrahydrodipicolinate + NADP(+) + H2O = (2S,4S)-4-hydroxy-2,3,4,5-tetrahydrodipicolinate + NADPH + H(+). It functions in the pathway amino-acid biosynthesis; L-lysine biosynthesis via DAP pathway; (S)-tetrahydrodipicolinate from L-aspartate: step 4/4. Catalyzes the conversion of 4-hydroxy-tetrahydrodipicolinate (HTPA) to tetrahydrodipicolinate. This Vibrio cholerae serotype O1 (strain ATCC 39541 / Classical Ogawa 395 / O395) protein is 4-hydroxy-tetrahydrodipicolinate reductase.